Here is a 184-residue protein sequence, read N- to C-terminus: ATP synthase subunit delta (184 aa).

The protein belongs to the ATPase delta chain family. As to quaternary structure, F-type ATPases have 2 components, F(1) - the catalytic core - and F(0) - the membrane proton channel. F(1) has five subunits: alpha(3), beta(3), gamma(1), delta(1), epsilon(1). F(0) has three main subunits: a(1), b(2) and c(10-14). The alpha and beta chains form an alternating ring which encloses part of the gamma chain. F(1) is attached to F(0) by a central stalk formed by the gamma and epsilon chains, while a peripheral stalk is formed by the delta and b chains.

The protein localises to the cell inner membrane. F(1)F(0) ATP synthase produces ATP from ADP in the presence of a proton or sodium gradient. F-type ATPases consist of two structural domains, F(1) containing the extramembraneous catalytic core and F(0) containing the membrane proton channel, linked together by a central stalk and a peripheral stalk. During catalysis, ATP synthesis in the catalytic domain of F(1) is coupled via a rotary mechanism of the central stalk subunits to proton translocation. In terms of biological role, this protein is part of the stalk that links CF(0) to CF(1). It either transmits conformational changes from CF(0) to CF(1) or is implicated in proton conduction. The chain is ATP synthase subunit delta from Rickettsia conorii (strain ATCC VR-613 / Malish 7).